Here is a 369-residue protein sequence, read N- to C-terminus: Glutamate 5-kinase (369 aa).

Lys7 is a binding site for ATP. Substrate contacts are provided by Ser48, Asp135, and Asn147. Residues 167–168 (TD) and 208–214 (SGGMASK) contribute to the ATP site. Residues 275–353 (AGALHLDEGA…HEIAALLGIE (79 aa)) form the PUA domain.

It belongs to the glutamate 5-kinase family.

The protein resides in the cytoplasm. It carries out the reaction L-glutamate + ATP = L-glutamyl 5-phosphate + ADP. It functions in the pathway amino-acid biosynthesis; L-proline biosynthesis; L-glutamate 5-semialdehyde from L-glutamate: step 1/2. In terms of biological role, catalyzes the transfer of a phosphate group to glutamate to form L-glutamate 5-phosphate. This is Glutamate 5-kinase from Gloeobacter violaceus (strain ATCC 29082 / PCC 7421).